The primary structure comprises 515 residues: Cell division control protein 6 homolog (515 aa).

Over residues 1–24 (MPTLRSATASASTAGTASPTAIAT) the composition is skewed to low complexity. Positions 1–70 (MPTLRSATAS…TPKLLSASPR (70 aa)) are disordered. The segment covering 43–52 (DASQFTSPHK) has biased composition (polar residues).

The protein belongs to the CDC6/cdc18 family.

It is found in the nucleus. Functionally, may be involved in the initiation of DNA replication. In Oryza sativa subsp. japonica (Rice), this protein is Cell division control protein 6 homolog.